Here is a 315-residue protein sequence, read N- to C-terminus: GTPase Era (315 aa).

Residues 21 to 190 (RSGFVAIVGR…QSALEARLDP (170 aa)) enclose the Era-type G domain. The G1 stretch occupies residues 29-36 (GRPNVGKS). 29–36 (GRPNVGKS) lines the GTP pocket. Residues 55–59 (QTTRN) are G2. Residues 76–79 (DTPG) are G3. Residues 76–80 (DTPGI) and 138–141 (NKQD) each bind GTP. A G4 region spans residues 138 to 141 (NKQD). The G5 stretch occupies residues 169–171 (FSA). One can recognise a KH type-2 domain in the interval 221–297 (TRQEVPHSVA…YLKLFVKVEP (77 aa)).

The protein belongs to the TRAFAC class TrmE-Era-EngA-EngB-Septin-like GTPase superfamily. Era GTPase family. In terms of assembly, monomer.

Its subcellular location is the cytoplasm. The protein localises to the cell inner membrane. Functionally, an essential GTPase that binds both GDP and GTP, with rapid nucleotide exchange. Plays a role in 16S rRNA processing and 30S ribosomal subunit biogenesis and possibly also in cell cycle regulation and energy metabolism. In Synechocystis sp. (strain ATCC 27184 / PCC 6803 / Kazusa), this protein is GTPase Era.